We begin with the raw amino-acid sequence, 1523 residues long: ATP-binding cassette sub-family C member 3 (1523 aa).

The Extracellular portion of the chain corresponds to 1 to 35 (MDRLCGSGELGSKFWDSNLSIYTNTPDLTPCFQNS). A glycan (N-linked (GlcNAc...) asparagine) is linked at Asn18. Residues 36–56 (LLAWVPCIYLWAALPCYLFYL) form a helical membrane-spanning segment. The Cytoplasmic portion of the chain corresponds to 57-75 (RHHQLGYIVLSWLSRLKTA). The helical transmembrane segment at 76–96 (LGVLLWCVSWVDLFYSFHGLI) threads the bilayer. Over 97–102 (HGSSPA) the chain is Extracellular. A helical membrane pass occupies residues 103-123 (PVFFVTPLVVGITMLLATLLI). At 124–129 (QYERLR) the chain is on the cytoplasmic side. The chain crosses the membrane as a helical span at residues 130–150 (GVQSSGVLIIFWLLCVICAII). The Extracellular segment spans residues 151 to 170 (PFRSKILSALAEGKILDPFR). Residues 171–191 (FTTFYIYFALVFCALILSCFK) traverse the membrane as a helical segment. Residues 192–301 (EKPPLFSPEN…KSKQPSFLRA (110 aa)) lie on the Cytoplasmic side of the membrane. The chain crosses the membrane as a helical span at residues 302 to 324 (LVRTFTSSLLMSACFNLIQNLLG). Residues 310 to 593 (LLMSACFNLI…LPQLISGLTQ (284 aa)) enclose the ABC transmembrane type-1 1 domain. The Extracellular portion of the chain corresponds to 325–345 (FVNPQLLSILIRFISDPTAPT). The helical transmembrane segment at 346–366 (WWGFLLAGLMFLSSTMQTLIL) threads the bilayer. Over 367–419 (HQYYHCIFVMALRLRTAIIGVIYRKALVITNSVKRESTVGEMVNLMSVDAQRF) the chain is Cytoplasmic. Residues 420–440 (MDVSPFINLLWSAPLQVILAI) traverse the membrane as a helical segment. Residue Tyr441 is a topological domain, extracellular. A helical membrane pass occupies residues 442–462 (FLWQILGPSALAGVAVIVLLI). The Cytoplasmic segment spans residues 463-535 (PLNGAVSMKM…KGAYLQAIST (73 aa)). A helical membrane pass occupies residues 536 to 556 (FIWICTPFLVTLITLGVYVYV). The Extracellular segment spans residues 557–567 (DESNVLDAEKA). The chain crosses the membrane as a helical span at residues 568–588 (FVSLSLFNILKIPLNMLPQLI). Over 589–967 (SGLTQASVSL…YAKSMGLCTT (379 aa)) the chain is Cytoplasmic. The region spanning 626-850 (ITIHNGTFTW…DGSFANFLRN (225 aa)) is the ABC transporter 1 domain. Residue 660 to 667 (GPVGCGKS) coordinates ATP. Phosphoserine is present on residues Ser903 and Ser906. Polar residues predominate over residues 903 to 915 (SSLSSEGEVQNRT). The segment at 903–923 (SSLSSEGEVQNRTMPKKHTNS) is disordered. The ABC transmembrane type-1 2 domain maps to 967–1248 (TLSICLLYGG…MIRMISDLES (282 aa)). Residues 968–988 (LSICLLYGGQSAAAIGANVWL) traverse the membrane as a helical segment. Over 989–1013 (SAWSNDAEEHGQQNKTSVRLGVYAA) the chain is Extracellular. N-linked (GlcNAc...) asparagine glycosylation is present at Asn1002. The chain crosses the membrane as a helical span at residues 1014-1034 (LGILQGLLVMLSAFTMVVGAI). Topologically, residues 1035–1071 (QAARLLHEALLHNKIRSPQSFFDTTPSGRILNRFSKD) are cytoplasmic. A helical membrane pass occupies residues 1072–1092 (IYVIDEVLAPTILMLLNSFFT). The Extracellular portion of the chain corresponds to 1093 to 1096 (SIST). A helical membrane pass occupies residues 1097–1117 (IMVIVASTPLFMVVVLPLAVL). Over 1118-1191 (YGFVQRFYVA…YPYIASNRWL (74 aa)) the chain is Cytoplasmic. The chain crosses the membrane as a helical span at residues 1192–1212 (GVHVEFVGNCVVLFAALFAVI). Residues 1213-1219 (GRNSLNP) are Extracellular-facing. A helical membrane pass occupies residues 1220-1240 (GLVGLSVSYALQVTMALNWMI). The Cytoplasmic portion of the chain corresponds to 1241–1523 (RMISDLESNI…YGMAKDAGLA (283 aa)). Positions 1287-1519 (FRNYSVRYRP…GGIFYGMAKD (233 aa)) constitute an ABC transporter 2 domain. 1319-1326 (GRTGAGKS) contributes to the ATP binding site.

This sequence belongs to the ABC transporter superfamily. ABCC family. Conjugate transporter (TC 3.A.1.208) subfamily. As to expression, detected throughout the gastrointestinal tract, liver, lung, pancreas, bladder, gall bladder and at low levels in the adrenal gland.

The protein resides in the basolateral cell membrane. It localises to the basal cell membrane. The catalysed reaction is an S-substituted glutathione(in) + ATP + H2O = an S-substituted glutathione(out) + ADP + phosphate + H(+). The enzyme catalyses ATP + H2O + xenobioticSide 1 = ADP + phosphate + xenobioticSide 2.. It catalyses the reaction 17beta-estradiol 17-O-(beta-D-glucuronate)(in) + ATP + H2O = 17beta-estradiol 17-O-(beta-D-glucuronate)(out) + ADP + phosphate + H(+). It carries out the reaction dehydroepiandrosterone 3-sulfate(in) + ATP + H2O = dehydroepiandrosterone 3-sulfate(out) + ADP + phosphate + H(+). The catalysed reaction is leukotriene C4(in) + ATP + H2O = leukotriene C4(out) + ADP + phosphate + H(+). The enzyme catalyses taurocholate(in) + ATP + H2O = taurocholate(out) + ADP + phosphate + H(+). It catalyses the reaction glycocholate(in) + ATP + H2O = glycocholate(out) + ADP + phosphate + H(+). It carries out the reaction taurolithocholate 3-sulfate(in) + ATP + H2O = taurolithocholate 3-sulfate(out) + ADP + phosphate + H(+). The catalysed reaction is taurochenodeoxycholate 3-sulfate(in) + ATP + H2O = taurochenodeoxycholate 3-sulfate(out) + ADP + phosphate + H(+). The enzyme catalyses (4Z,15Z)-bilirubin IXalpha C8-beta-D-glucuronoside(in) + ATP + H2O = (4Z,15Z)-bilirubin IXalpha C8-beta-D-glucuronoside(out) + ADP + phosphate + H(+). It catalyses the reaction (4Z,15Z)-bilirubin IXalpha C8,C12-beta-D-bisglucuronoside(in) + ATP + H2O = (4Z,15Z)-bilirubin IXalpha C8,C12-beta-D-bisglucuronoside(out) + ADP + phosphate + H(+). Its function is as follows. ATP-dependent transporter of the ATP-binding cassette (ABC) family that binds and hydrolyzes ATP to enable active transport of various substrates including many drugs, toxicants and endogenous compound across cell membranes. Transports glucuronide conjugates such as bilirubin diglucuronide, estradiol-17-beta-o-glucuronide and GSH conjugates such as leukotriene C4 (LTC4). Transports also various bile salts (taurocholate, glycocholate, taurochenodeoxycholate-3-sulfate, taurolithocholate- 3-sulfate). Does not contribute substantially to bile salt physiology but provides an alternative route for the export of bile acids and glucuronides from cholestatic hepatocytes. May contribute to regulate the transport of organic compounds in testes across the blood-testis-barrier. The sequence is that of ATP-binding cassette sub-family C member 3 (Abcc3) from Mus musculus (Mouse).